We begin with the raw amino-acid sequence, 91 residues long: Transcription factor ILI7 (91 aa).

Positions 4-58 (RSRSRASSAARITDEQIGDLVSKLQALLPEARLRSNDRVPSARVLQETCSYIRSL) constitute a bHLH domain.

The protein belongs to the bHLH protein family.

In terms of biological role, atypical and probable non DNA-binding bHLH transcription factor that integrates multiple signaling pathways to regulate cell elongation and plant development. In Oryza sativa subsp. indica (Rice), this protein is Transcription factor ILI7 (ILI7).